A 382-amino-acid polypeptide reads, in one-letter code: Methenyltetrahydrofolate synthase domain-containing protein (382 aa).

The 77-residue stretch at 306-382 (TTVYLSDIPP…QAKCVSSQKM (77 aa)) folds into the RRM domain.

This is Methenyltetrahydrofolate synthase domain-containing protein (mthfsd) from Danio rerio (Zebrafish).